The following is a 135-amino-acid chain: Early E3 15.3 kDa protein (135 aa).

The protein belongs to the adenoviridae E3_15 family.

Its function is as follows. Protects virus-infected cells from TNF-induced cytolysis. This is Early E3 15.3 kDa protein from Human adenovirus B serotype 7 (HAdV-7).